A 2582-amino-acid chain; its full sequence is Chromodomain-helicase-DNA-binding protein 8 (2582 aa).

Disordered regions lie at residues 22 to 111, 136 to 155, 253 to 283, and 349 to 377; these read DDSF…PVLQ, MGVS…PSQS, VKGS…TQGE, and QKIQ…PLTL. Composition is skewed to polar residues over residues 42 to 51, 94 to 111, and 141 to 155; these read SLDSLDQMNQ, DYTT…PVLQ, and TGVS…PSQS. Residues 255–267 show a composition bias toward low complexity; it reads GSAPAGNPGAAGP. Over residues 355-372 the composition is skewed to pro residues; sequence PQPPSSQPQPQPQPPPSA. Ser-434 is subject to Phosphoserine. 2 disordered regions span residues 475–585 and 598–617; these read RARG…VKRK and DEEE…PILP. The span at 495 to 518 shows a compositional bias: basic and acidic residues; it reads RPEEEGEKKRRKKSSGERLKEEKP. A phosphoserine mark is found at Ser-555 and Ser-564. Positions 574-585 are enriched in basic residues; it reads QKRRSNRQVKRK. A Glycyl lysine isopeptide (Lys-Gly) (interchain with G-Cter in SUMO) cross-link involves residue Lys-611. Chromo domains lie at 644-711 and 726-792; these read AIVD…AQMR and VEVD…RVNR. The Helicase ATP-binding domain maps to 825–999; sequence LFNWYNRQNC…FSLLHFLEPS (175 aa). 838–845 contacts ATP; sequence DEMGLGKT. The DEAH box motif lies at 950–953; that stretch reads DEAH. One can recognise a Helicase C-terminal domain in the interval 1139–1290; sequence LIDKLLPKLK…KAVLQSMSGR (152 aa). Phosphoserine is present on residues Ser-1422 and Ser-1426. A disordered region spans residues 1694–1715; it reads EDPEYKPLQGPPKDPDDEGDPL. Residues 1791-2304 are interaction with FAM124B; it reads IARREKQQRW…LVELEVECME (514 aa). A phosphoserine mark is found at Ser-1978 and Ser-1980. A disordered region spans residues 1990–2019; the sequence is QCTSRTASPSPLRPDAPVEKSPEESTVQVP. Thr-1995 is subject to Phosphothreonine. 3 positions are modified to phosphoserine: Ser-1997, Ser-1999, and Ser-2010. Residue Lys-2027 forms a Glycyl lysine isopeptide (Lys-Gly) (interchain with G-Cter in SUMO2) linkage. Phosphoserine occurs at positions 2040, 2070, and 2072. The disordered stretch occupies residues 2045–2120; sequence VRVGSSDTAP…RSRPKLYDEE (76 aa). Residues 2065-2074 show a composition bias toward acidic residues; sequence EDEDDSDSEL. Residues 2077–2096 show a composition bias toward low complexity; that stretch reads SKLSPSSSSSSSSSSSSSST. Residues 2104 to 2118 are compositionally biased toward basic and acidic residues; sequence EEKLTADRSRPKLYD. Ser-2184, Ser-2202, and Ser-2204 each carry phosphoserine. The disordered stretch occupies residues 2187 to 2233; sequence VTAGGILGPGNHLLDSPSLTPGEDGDSPVPTPRSGSAASMAEEEASA. Thr-2206 carries the phosphothreonine modification. A Phosphoserine modification is found at Ser-2213. The residue at position 2217 (Thr-2217) is a Phosphothreonine. Positions 2222–2233 are enriched in low complexity; the sequence is SAASMAEEEASA. Ser-2225 carries the phosphoserine modification. Residue Lys-2258 forms a Glycyl lysine isopeptide (Lys-Gly) (interchain with G-Cter in SUMO2) linkage. Positions 2486-2582 are disordered; it reads HVDSSTMLHH…NSDSSEDADD (97 aa). The segment covering 2493–2511 has biased composition (basic residues); it reads LHHHHHHPHPHHHHHHHPG. The segment covering 2514 to 2529 has biased composition (low complexity); sequence TTGYPSSPATTTSGTA. Position 2520 is a phosphoserine (Ser-2520). Over residues 2537-2551 the composition is skewed to acidic residues; the sequence is PEDDDEEEDEEDDDL.

Belongs to the SNF2/RAD54 helicase family. CHD8 subfamily. As to quaternary structure, interacts with CTNNB1 and PIAS3. Component of some MLL1/MLL complex, at least composed of the core components KMT2A/MLL1, ASH2L, HCFC1/HCF1, WDR5 and RBBP5, as well as the facultative components BACC1, CHD8, E2F6, HSP70, INO80C, KANSL1, LAS1L, MAX, MCRS1, MGA, KAT8/MOF, PELP1, PHF20, PRP31, RING2, RUVB1/TIP49A, RUVB2/TIP49B, SENP3, TAF1, TAF4, TAF6, TAF7, TAF9 and TEX10. Interacts with CHD7. Interacts with FAM124B. Interacts with p53/TP53 and histone H1. Interacts with CTCF. Interacts with TLK2. Interacts with HNRNPL in an RNA-dependent manner. Post-translationally, sumoylated.

The protein resides in the nucleus. It carries out the reaction ATP + H2O = ADP + phosphate + H(+). ATP-dependent chromatin-remodeling factor, it slides nucleosomes along DNA; nucleosome sliding requires ATP. Acts as a transcription repressor by remodeling chromatin structure and recruiting histone H1 to target genes. Suppresses p53/TP53-mediated apoptosis by recruiting histone H1 and preventing p53/TP53 transactivation activity. Acts as a negative regulator of Wnt signaling pathway by regulating beta-catenin (CTNNB1) activity. Negatively regulates CTNNB1-targeted gene expression by being recruited specifically to the promoter regions of several CTNNB1 responsive genes. Involved in both enhancer blocking and epigenetic remodeling at chromatin boundary via its interaction with CTCF. Acts as a suppressor of STAT3 activity by suppressing the LIF-induced STAT3 transcriptional activity. Also acts as a transcription activator via its interaction with ZNF143 by participating in efficient U6 RNA polymerase III transcription. Regulates alternative splicing of a core group of genes involved in neuronal differentiation, cell cycle and DNA repair. Enables H3K36me3-coupled transcription elongation and co-transcriptional RNA processing likely via interaction with HNRNPL. The polypeptide is Chromodomain-helicase-DNA-binding protein 8 (Mus musculus (Mouse)).